The primary structure comprises 717 residues: Nuclear factor of activated T-cells, cytoplasmic 1 (717 aa).

The segment at 1 to 38 is disordered; that stretch reads MPNTSFPVPSKFPLGPPAAVCGSGETLRPAPPSGGTMK. The calcineurin-binding stretch occupies residues 120-125; sequence PRIEIT. Residues 128–220 are transactivation domain A (TAD-A); the sequence is LGLHHGSGQF…CVSPKTTDPE (93 aa). Residues 202-298 are disordered; it reads PQTSPWQSPC…PHGSPRVSVT (97 aa). The span at 203–216 shows a compositional bias: polar residues; that stretch reads QTSPWQSPCVSPKT. 2 tandem repeats follow at residues 205 to 221 and 235 to 251. Residues 205–300 form a 3 X SP repeats region; the sequence is SPWQSPCVSP…GSPRVSVTED (96 aa). A phosphoserine mark is found at S235 and S239. Over residues 238 to 250 the composition is skewed to polar residues; that stretch reads HSPSTSPRASITE. Position 247 is a phosphoserine; by PKA (S247). A Nuclear localization signal motif is present at residues 267-269; the sequence is KRK. Phosphoserine; by PKA occurs at positions 271 and 296. Copy 3 of the repeat occupies 284–300; it reads SPTPSPHGSPRVSVTED. The Nuclear export signal signature appears at 312-323; that stretch reads SAIVAAINALTT. Positions 411–593 constitute an RHD domain; it reads PSLPALDWQL…NPIECSQRSA (183 aa). A DNA-binding region spans residues 440-447; sequence RAHYETEG. A Nuclear localization signal motif is present at residues 683-685; that stretch reads KRK.

As to quaternary structure, member of the multicomponent NFATC transcription complex that consists of at least two components, a pre-existing cytoplasmic component NFATC2 and an inducible nuclear component NFATC1. Other members such as NFATC4, NFATC3 or members of the activating protein-1 family, MAF, GATA4 and Cbp/p300 can also bind the complex. NFATC proteins bind to DNA as monomers. Interacts with HOMER2 and HOMER3; this interaction may compete with calcineurin/PPP3CA-binding and hence prevent NFATC1 dephosphorylation and activation. Interacts with TLE6/GRG6. In terms of processing, phosphorylated by NFATC-kinase and GSK3B; phosphorylation induces NFATC1 nuclear exit and dephosphorylation by calcineurin promotes nuclear import. Phosphorylation by PKA and DYRK2 negatively modulates nuclear accumulation, and promotes subsequent phosphorylation by GSK3B or casein kinase 1. As to expression, expressed in the submandibular gland (at protein level). Expressed in basal epidermal cells (at protein level). Expressed in spleen, skeletal muscle and skin. Express in the lung and thymus. Weakly expressed in heart, brain, liver and kidney. Not expressed in testis. Expressed in osteoclasts. Also expressed during TNFSF11/RANKL-induced differentiation of bone marrow-derived macrophages to osteoclasts.

Its subcellular location is the cytoplasm. It localises to the nucleus. Its function is as follows. Plays a role in the inducible expression of cytokine genes in T-cells, especially in the induction of the IL-2 or IL-4 gene transcription. Also controls gene expression in embryonic cardiac cells. Could regulate not only the activation and proliferation but also the differentiation and programmed death of T-lymphocytes as well as lymphoid and non-lymphoid cells. Required for osteoclastogenesis and regulates many genes important for osteoclast differentiation and function. This Mus musculus (Mouse) protein is Nuclear factor of activated T-cells, cytoplasmic 1 (Nfatc1).